The following is a 543-amino-acid chain: Allantoate permease (543 aa).

Residues M1–K80 lie on the Cytoplasmic side of the membrane. A helical membrane pass occupies residues I81–F97. The Extracellular segment spans residues M98 to S123. A helical membrane pass occupies residues W124 to F145. The Cytoplasmic segment spans residues Q146–M154. A helical membrane pass occupies residues L155 to A171. Residues P172–S178 are Extracellular-facing. A helical transmembrane segment spans residues F179 to I200. Residues T201–R213 are Cytoplasmic-facing. A helical transmembrane segment spans residues V214–I237. Residues H238–R248 lie on the Extracellular side of the membrane. A helical transmembrane segment spans residues T249–I269. The Cytoplasmic portion of the chain corresponds to P270–T317. Residues W318–L342 form a helical membrane-spanning segment. Topologically, residues N343–E352 are extracellular. The helical transmembrane segment at T353–Y377 threads the bilayer. The Cytoplasmic segment spans residues A378 to K389. A helical membrane pass occupies residues L390–T411. Residues N412 to R417 lie on the Extracellular side of the membrane. Residues L418–L435 form a helical membrane-spanning segment. Residues S436 to S453 are Cytoplasmic-facing. Residues I454 to A472 form a helical membrane-spanning segment. Topologically, residues K473–K482 are extracellular. Residues V483–L504 form a helical membrane-spanning segment. Over R505 to L543 the chain is Cytoplasmic.

This sequence belongs to the major facilitator superfamily. Allantoate permease family.

Its subcellular location is the membrane. Component of the allantoate transport system. This chain is Allantoate permease (DAL5), found in Saccharomyces cerevisiae (strain ATCC 204508 / S288c) (Baker's yeast).